A 470-amino-acid polypeptide reads, in one-letter code: Poly(A) polymerase catalytic subunit (470 aa).

Active-site residues include Asp192 and Asp194.

This sequence belongs to the poxviridae poly(A) polymerase catalytic subunit family. In terms of assembly, heterodimer of a large (catalytic) subunit and a small (regulatory) subunit.

The catalysed reaction is RNA(n) + ATP = RNA(n)-3'-adenine ribonucleotide + diphosphate. In terms of biological role, polymerase that creates the 3'-poly(A) tail of mRNA's. This Myxoma virus (strain Lausanne) (MYXV) protein is Poly(A) polymerase catalytic subunit (PAPL).